A 149-amino-acid polypeptide reads, in one-letter code: Immunoglobulin kappa chain variable 6-17 (149 aa).

The first 29 residues, 1–29 (MHHTSMGIKMESQIQVFVFVFLWLSGVDG), serve as a signal peptide directing secretion. 2 repeats span residues 26-35 (GVDGDIVMTQ) and 38-47 (GVDGDIVMTQ). Residues 42–64 (DIVMTQSHKFMSTSVGDRVSITC) form a framework-1 region. Residues 65–75 (KASQDVSTTVA) are complementarity-determining-1. The segment at 76-90 (WYQQKPGQSPKLLIY) is framework-2. The tract at residues 91–97 (SASYRYT) is complementarity-determining-2. The tract at residues 98–129 (GVPDRFTGSGSGTDFTFTISSVQAEDLAVYYC) is framework-3. The complementarity-determining-3 stretch occupies residues 130–138 (QQHYSTPPT). A framework-4 region spans residues 139-148 (FGGGTKLEIK).

The polypeptide is Immunoglobulin kappa chain variable 6-17 (Mus musculus (Mouse)).